The chain runs to 440 residues: MKAWIWFTFVACLFAASTEAASNLVCYYDSSSYTREGLGKLLNPDLEIALQFCSHLVYGYAGLRGENLQAYSMNENLDIYKHQFSEVTSLKRKYPHLKVLLSVGGDHDIDPDHPNKYIDLLEGEKVRQIGFIRSAYDLVKTYGFDGLDLAYQFPKNKPRKVHGDLGLAWKSIKKLFTGDFIVDPHAALHKEQFTALVRDVKDSLRADGFLLSLTVLPNVNSTWYFDIPALNGLVDFVNLATFDFLTPARNPEEADYSAPIYHPDGSKDRLAHLNADFQVEYWLSQGFPSNKINLGVATYGNAWKLTKDSGLEGVPVVPETSGPAPEGFQSQKPGLLSYAEICGKLSNPQNQFLKGNESPLRRVSDPTKRFGGIAYRPVDGQITEGIWVSYDDPDSASNKAAYARVKNLGGVALFDLSYDDFRGQCSGDKYPILRAIKYRL.

The first 20 residues, 1 to 20, serve as a signal peptide directing secretion; that stretch reads MKAWIWFTFVACLFAASTEA. Positions 22 to 440 constitute a GH18 domain; the sequence is SNLVCYYDSS…PILRAIKYRL (419 aa). C26 and C53 are oxidised to a cystine. N220 carries N-linked (GlcNAc...) asparagine glycosylation. A disulfide bridge connects residues C342 and C425.

Belongs to the glycosyl hydrolase 18 family. IDGF subfamily. Post-translationally, glycosylated. Primarily expressed in yolk cells and fat body. In larvae, it is expressed in the imaginal ring and weakly expressed in imaginal disks. More strongly expressed than Idgf1 and Idgf3.

The protein resides in the secreted. Functionally, cooperates with insulin-like peptides to stimulate the proliferation, polarization and motility of imaginal disk cells. May act by stabilizing the binding of insulin-like peptides to its receptor through a simultaneous interaction with both molecules to form a multiprotein signaling complex. This is Chitinase-like protein Idgf2 (Idgf2) from Drosophila melanogaster (Fruit fly).